Reading from the N-terminus, the 664-residue chain is Protein SIEVE ELEMENT OCCLUSION C (664 aa).

This Arabidopsis thaliana (Mouse-ear cress) protein is Protein SIEVE ELEMENT OCCLUSION C.